The chain runs to 706 residues: Elongation factor G (706 aa).

One can recognise a tr-type G domain in the interval 8–297 (ERVRNIGIAA…AVIDYLPAPT (290 aa)). Residues 17–24 (AHIDAGKT), 96–100 (DTPGH), and 150–153 (NKMD) contribute to the GTP site.

Belongs to the TRAFAC class translation factor GTPase superfamily. Classic translation factor GTPase family. EF-G/EF-2 subfamily.

The protein localises to the cytoplasm. Its function is as follows. Catalyzes the GTP-dependent ribosomal translocation step during translation elongation. During this step, the ribosome changes from the pre-translocational (PRE) to the post-translocational (POST) state as the newly formed A-site-bound peptidyl-tRNA and P-site-bound deacylated tRNA move to the P and E sites, respectively. Catalyzes the coordinated movement of the two tRNA molecules, the mRNA and conformational changes in the ribosome. The polypeptide is Elongation factor G (Cyanothece sp. (strain PCC 7425 / ATCC 29141)).